The primary structure comprises 888 residues: Alanine--tRNA ligase (888 aa).

His-573, His-577, Cys-676, and His-680 together coordinate Zn(2+).

It belongs to the class-II aminoacyl-tRNA synthetase family. Requires Zn(2+) as cofactor.

Its subcellular location is the cytoplasm. It catalyses the reaction tRNA(Ala) + L-alanine + ATP = L-alanyl-tRNA(Ala) + AMP + diphosphate. Functionally, catalyzes the attachment of alanine to tRNA(Ala) in a two-step reaction: alanine is first activated by ATP to form Ala-AMP and then transferred to the acceptor end of tRNA(Ala). Also edits incorrectly charged Ser-tRNA(Ala) and Gly-tRNA(Ala) via its editing domain. The protein is Alanine--tRNA ligase of Corynebacterium diphtheriae (strain ATCC 700971 / NCTC 13129 / Biotype gravis).